The chain runs to 66 residues: Large ribosomal subunit protein bL33c (66 aa).

The protein belongs to the bacterial ribosomal protein bL33 family.

Its subcellular location is the plastid. The protein resides in the chloroplast. The protein is Large ribosomal subunit protein bL33c of Adiantum capillus-veneris (Maidenhair fern).